Consider the following 229-residue polypeptide: ATP synthase subunit a 1 (229 aa).

Helical transmembrane passes span 25-45, 86-106, 111-131, 142-162, 181-201, and 202-222; these read ADAV…SFLA, VATV…PGFF, NINT…VVGI, FCGP…IGHL, LVLI…MMLM, and GVLV…IYIQ.

It belongs to the ATPase A chain family. As to quaternary structure, F-type ATPases have 2 components, CF(1) - the catalytic core - and CF(0) - the membrane proton channel. CF(1) has five subunits: alpha(3), beta(3), gamma(1), delta(1), epsilon(1). CF(0) has three main subunits: a(1), b(2) and c(9-12). The alpha and beta chains form an alternating ring which encloses part of the gamma chain. CF(1) is attached to CF(0) by a central stalk formed by the gamma and epsilon chains, while a peripheral stalk is formed by the delta and b chains.

It is found in the cell inner membrane. Key component of the proton channel; it plays a direct role in the translocation of protons across the membrane. The polypeptide is ATP synthase subunit a 1 (Pelobacter propionicus (strain DSM 2379 / NBRC 103807 / OttBd1)).